Reading from the N-terminus, the 142-residue chain is Anti-sigma F factor (142 aa).

This sequence belongs to the anti-sigma-factor family.

It carries out the reaction L-seryl-[protein] + ATP = O-phospho-L-seryl-[protein] + ADP + H(+). The catalysed reaction is L-threonyl-[protein] + ATP = O-phospho-L-threonyl-[protein] + ADP + H(+). Its function is as follows. Binds to sigma F and blocks its ability to form an RNA polymerase holoenzyme (E-sigma F). Phosphorylates SpoIIAA on a serine residue. This phosphorylation may enable SpoIIAA to act as an anti-anti-sigma factor that counteracts SpoIIAB and thus releases sigma F from inhibition. The chain is Anti-sigma F factor from Clostridium kluyveri (strain NBRC 12016).